The sequence spans 248 residues: Adenosylcobinamide-GDP ribazoletransferase (248 aa).

The next 5 helical transmembrane spans lie at 30-50 (LAES…CYAL), 54-74 (VLSG…LTAV), 112-132 (FGAL…DAVI), 134-154 (AGSF…MVLA), and 188-208 (AVSA…LAAG).

Belongs to the CobS family. Mg(2+) serves as cofactor.

The protein resides in the cell inner membrane. The enzyme catalyses alpha-ribazole + adenosylcob(III)inamide-GDP = adenosylcob(III)alamin + GMP + H(+). It catalyses the reaction alpha-ribazole 5'-phosphate + adenosylcob(III)inamide-GDP = adenosylcob(III)alamin 5'-phosphate + GMP + H(+). It participates in cofactor biosynthesis; adenosylcobalamin biosynthesis; adenosylcobalamin from cob(II)yrinate a,c-diamide: step 7/7. In terms of biological role, joins adenosylcobinamide-GDP and alpha-ribazole to generate adenosylcobalamin (Ado-cobalamin). Also synthesizes adenosylcobalamin 5'-phosphate from adenosylcobinamide-GDP and alpha-ribazole 5'-phosphate. The chain is Adenosylcobinamide-GDP ribazoletransferase from Syntrophobacter fumaroxidans (strain DSM 10017 / MPOB).